We begin with the raw amino-acid sequence, 636 residues long: MHLSEITHPNQLHGLSLRQLEDIARQIREKHLQTIAATGGHLGPGLGVVELTIALYQTLDLDRDKVLWDVGHQAYPHKLLTGRYNDFHTLRQKDGIAGYLKRCESKFDHFGAGHASTSISAGLGMALARDAKGEDFKVVSIIGDGALTGGMALEAINHAGHLPNTNIMVILNDNEMSISPNVGAISRYLNKVRLSEPVQFIADNLEEQFKNLPFFGDSLTPEMERVKEGMKRLAVPKVGAVIEELGFKYFGPIDGHNIPELIATFKQAHKVHGPVFVHVATVKGKGYEWAEKDQVGYHAQNPFNLATGKPIPSSKPKPPAYSKVFGHTLTKLAENDPRIIGITAAMATGTGLDKFQAKLPKQYIDVGIAEQHAVTLAGGLACEGMRPVVTIYSTFLQRAFDQIIHDICIQNLPVFFCMDRAGIVGADGPTHQGMYDIAYLRCIPNMTIMAPKDEAELQRMVVTGINHTSGPIAMRYPRGNGLGVPLMEEGWEALPIGKGEILRSGDDILLLGYGTMVNTSLQVAEILSEHGIEATVVNARFVKPLDTELIFPLAQRLGKVVTLEEGCLMGGFGSAVLEALQDANILVPVKRFGVPDKLVDHATPEESFADLGLTSPQIAQQVLAAFFSQKQTANVG.

Thiamine diphosphate is bound by residues H72 and 113 to 115; that span reads GHA. Residue D144 participates in Mg(2+) binding. Residues 145 to 146, N174, Y287, and E370 contribute to the thiamine diphosphate site; that span reads GA. Position 174 (N174) interacts with Mg(2+).

This sequence belongs to the transketolase family. DXPS subfamily. Homodimer. Mg(2+) serves as cofactor. It depends on thiamine diphosphate as a cofactor.

It catalyses the reaction D-glyceraldehyde 3-phosphate + pyruvate + H(+) = 1-deoxy-D-xylulose 5-phosphate + CO2. Its pathway is metabolic intermediate biosynthesis; 1-deoxy-D-xylulose 5-phosphate biosynthesis; 1-deoxy-D-xylulose 5-phosphate from D-glyceraldehyde 3-phosphate and pyruvate: step 1/1. Its function is as follows. Catalyzes the acyloin condensation reaction between C atoms 2 and 3 of pyruvate and glyceraldehyde 3-phosphate to yield 1-deoxy-D-xylulose-5-phosphate (DXP). The protein is 1-deoxy-D-xylulose-5-phosphate synthase of Microcystis aeruginosa (strain NIES-843 / IAM M-2473).